The primary structure comprises 511 residues: DnaJ homolog 1, mitochondrial (511 aa).

Residues Met-1–Asn-55 constitute a mitochondrion transit peptide. One can recognise a J domain in the interval Phe-59–Ala-127. The CR-type zinc finger occupies Ser-217–Arg-297. CXXCXGXG motif repeat units lie at residues Cys-230–Gly-237, Cys-247–Gly-254, Cys-269–Gly-276, and Cys-285–Gly-292.

It localises to the mitochondrion. Functionally, plays a role in mitochondrial biogenesis and protein folding. The sequence is that of DnaJ homolog 1, mitochondrial (MDJ1) from Saccharomyces cerevisiae (strain ATCC 204508 / S288c) (Baker's yeast).